The primary structure comprises 215 residues: UPF0323 lipoprotein jhp_0217 (215 aa).

Residues 1 to 27 form the signal peptide; the sequence is MKKPYRKISDYAIVGGLSALVMVSIVG. A lipid anchor (N-palmitoyl cysteine) is attached at Cys-28. The S-diacylglycerol cysteine moiety is linked to residue Cys-28. Positions 158–169 are enriched in polar residues; that stretch reads QRTYKSPQAYQR. Residues 158 to 215 are disordered; it reads QRTYKSPQAYQRSQNSFSKSAPSASSMGTASKGQSGFFGSSRPTSSPAISSGTRGFNA. The segment covering 170-183 has biased composition (low complexity); that stretch reads SQNSFSKSAPSASS. A compositionally biased stretch (polar residues) spans 184–195; the sequence is MGTASKGQSGFF. Residues 197 to 208 are compositionally biased toward low complexity; that stretch reads SSRPTSSPAISS.

It belongs to the UPF0323 family.

The protein resides in the cell membrane. This Helicobacter pylori (strain J99 / ATCC 700824) (Campylobacter pylori J99) protein is UPF0323 lipoprotein jhp_0217.